A 68-amino-acid chain; its full sequence is MAAALSGLAVRLSRSAAARSYGVFCKGLTRTLLIFFDLAWRLRINFPYLYIVASMMLNVRLQVHIEIH.

This is Small integral membrane protein 10-like protein 3 from Homo sapiens (Human).